Consider the following 338-residue polypeptide: tRNA N6-adenosine threonylcarbamoyltransferase (338 aa).

Fe cation contacts are provided by His-111 and His-115. Substrate contacts are provided by residues 134–138, Asp-167, Gly-180, and Asn-272; that span reads LVSGG. Asp-300 is a Fe cation binding site.

This sequence belongs to the KAE1 / TsaD family. Requires Fe(2+) as cofactor.

It localises to the cytoplasm. The catalysed reaction is L-threonylcarbamoyladenylate + adenosine(37) in tRNA = N(6)-L-threonylcarbamoyladenosine(37) in tRNA + AMP + H(+). Its function is as follows. Required for the formation of a threonylcarbamoyl group on adenosine at position 37 (t(6)A37) in tRNAs that read codons beginning with adenine. Is involved in the transfer of the threonylcarbamoyl moiety of threonylcarbamoyl-AMP (TC-AMP) to the N6 group of A37, together with TsaE and TsaB. TsaD likely plays a direct catalytic role in this reaction. The protein is tRNA N6-adenosine threonylcarbamoyltransferase of Shewanella baltica (strain OS155 / ATCC BAA-1091).